A 375-amino-acid polypeptide reads, in one-letter code: 23S rRNA (uracil(747)-C(5))-methyltransferase RlmC (375 aa).

[4Fe-4S] cluster contacts are provided by Cys-3, Cys-11, Cys-14, and Cys-87. Positions 212, 241, 262, and 307 each coordinate S-adenosyl-L-methionine. The active-site Nucleophile is Cys-334.

This sequence belongs to the class I-like SAM-binding methyltransferase superfamily. RNA M5U methyltransferase family. RlmC subfamily.

The enzyme catalyses uridine(747) in 23S rRNA + S-adenosyl-L-methionine = 5-methyluridine(747) in 23S rRNA + S-adenosyl-L-homocysteine + H(+). In terms of biological role, catalyzes the formation of 5-methyl-uridine at position 747 (m5U747) in 23S rRNA. The sequence is that of 23S rRNA (uracil(747)-C(5))-methyltransferase RlmC from Shigella boydii serotype 18 (strain CDC 3083-94 / BS512).